Reading from the N-terminus, the 621-residue chain is (-)-beta-phellandrene synthase 1, chloroplastic (621 aa).

Residues 1–49 (MALALVSVAPLVSMRRSLFSSPYELKSIDKTIPNLVMCRKRMLGRPSIR) constitute a chloroplast transit peptide. Mg(2+) is bound by residues Asp-372, Asp-376, and Asp-524. The DDXXD motif signature appears at 372 to 376 (DDIYD).

The protein belongs to the terpene synthase family. Tpsd subfamily. Requires Mg(2+) as cofactor. Mn(2+) serves as cofactor.

The protein localises to the plastid. It localises to the chloroplast. It catalyses the reaction (2E)-geranyl diphosphate = (-)-beta-phellandrene + diphosphate. It participates in terpene metabolism; oleoresin biosynthesis. It functions in the pathway secondary metabolite biosynthesis; terpenoid biosynthesis. Monoterpene synthase (TPS) involved in the biosynthesis of monoterpene natural products included in conifer oleoresin secretions and volatile emissions; these compounds contribute to biotic and abiotic stress defense against herbivores and pathogens. Catalyzes the conversion of (2E)-geranyl diphosphate (GPP) to (-)-beta-phellandrene. The chain is (-)-beta-phellandrene synthase 1, chloroplastic from Pinus banksiana (Jack pine).